Here is a 210-residue protein sequence, read N- to C-terminus: uncharacterized protein (210 aa).

This is an uncharacterized protein from Nostoc sp. (strain PCC 7120 / SAG 25.82 / UTEX 2576).